We begin with the raw amino-acid sequence, 512 residues long: Probable anion transporter 3, chloroplastic (512 aa).

Residues 1 to 44 (MATVGSLKPLHHSSCSSSFPRNPIVNRKALLGFVFDSARKNQIR) constitute a chloroplast transit peptide. 12 consecutive transmembrane segments (helical) span residues 102–124 (VILT…VAVV), 139–159 (VVQS…GALV), 167–187 (VLAW…WAAA), 191–211 (LALL…MPSM), 228–248 (VGIS…LTPL), 250–270 (LSSI…LLWV), 324–344 (WAII…LSWM), 359–379 (AAWF…YAGA), 396–416 (KIMQ…LNFA), 422–442 (AAVF…GFLL), 462–482 (AGTL…QWLG), and 486–506 (AFLT…LLFA).

This sequence belongs to the major facilitator superfamily. Sodium/anion cotransporter (TC 2.A.1.14) family. In terms of tissue distribution, expressed in roots.

It localises to the plastid. Its subcellular location is the chloroplast membrane. In terms of biological role, inorganic phosphate and probable anion transporter. This Arabidopsis thaliana (Mouse-ear cress) protein is Probable anion transporter 3, chloroplastic (ANTR3).